The sequence spans 492 residues: Catalase isozyme 1 (492 aa).

Residues His65 and Asn138 contribute to the active site. Residue Tyr348 coordinates heme.

The protein belongs to the catalase family. In terms of assembly, homotetramer. It depends on heme as a cofactor. In terms of tissue distribution, in whole endosperms (aleurones plus starchy endosperm), in isolated aleurones and in developing seeds.

It is found in the peroxisome. It localises to the glyoxysome. The enzyme catalyses 2 H2O2 = O2 + 2 H2O. In terms of biological role, occurs in almost all aerobically respiring organisms and serves to protect cells from the toxic effects of hydrogen peroxide. The chain is Catalase isozyme 1 (CAT1) from Hordeum vulgare (Barley).